We begin with the raw amino-acid sequence, 185 residues long: Prenylated Rab acceptor protein 1 (185 aa).

The Cytoplasmic portion of the chain corresponds to 1 to 78; that stretch reads MAAQKDQQKD…RNVEYYQSNY (78 aa). Positions 30-54 are required for interaction with prenylated RAB3A and VAMP2; sequence AGREWLERRRATIRPWGTFVDQQRF. The next 2 helical transmembrane spans lie at 79–94 and 95–112; these read VFVFLGLILYCVVTSP and MLLVALAVFFGACYILYL. The Cytoplasmic segment spans residues 113 to 131; it reads RTLQSKLVLFGREVSPAHQ. 2 helical membrane-spanning segments follow: residues 132 to 148 and 149 to 165; these read YALAGGVSFPFFWLAGA and GSAVFWVLGATLVLIGS. Positions 165-185 are required for interaction with GDI1; sequence SHAAFHQIEPADGEELQMEPV. Over 166-185 the chain is Cytoplasmic; it reads HAAFHQIEPADGEELQMEPV. The segment at 175-185 is required for interaction with prenylated RAB3A and VAMP2; sequence ADGEELQMEPV. The interval 175–185 is homodimerization; that stretch reads ADGEELQMEPV.

The protein belongs to the PRA1 family. As to quaternary structure, homodimers. Interacts specifically with both prenylated Rab proteins (including RAB3A and RAB1), and VAMP2 (synaptobrevin-2), in an exclusive way. Interacts with NDRG1. Interacts with free GDI1 in the absence of Rab proteins. Also interacts with PCLO. In terms of tissue distribution, ubiquitous.

The protein resides in the cell membrane. Its subcellular location is the cytoplasm. The protein localises to the golgi apparatus. It localises to the cytoplasmic vesicle. It is found in the secretory vesicle. The protein resides in the synaptic vesicle. Functionally, general Rab protein regulator required for vesicle formation from the Golgi complex. May control vesicle docking and fusion by mediating the action of Rab GTPases to the SNARE complexes. In addition it inhibits the removal of Rab GTPases from the membrane by GDI1. This is Prenylated Rab acceptor protein 1 (Rabac1) from Rattus norvegicus (Rat).